The chain runs to 163 residues: NADH-quinone oxidoreductase subunit I (163 aa).

4Fe-4S ferredoxin-type domains lie at 54-84 (LRRYPNGEERCIACKLCEAVCPALAISIESD) and 94-123 (TRYDIDLTKCIFCGFCEEACPVDAIVETHI). [4Fe-4S] cluster contacts are provided by C64, C67, C70, C74, C103, C106, C109, and C113.

Belongs to the complex I 23 kDa subunit family. In terms of assembly, NDH-1 is composed of 14 different subunits. Subunits NuoA, H, J, K, L, M, N constitute the membrane sector of the complex. [4Fe-4S] cluster is required as a cofactor.

The protein localises to the cell inner membrane. The catalysed reaction is a quinone + NADH + 5 H(+)(in) = a quinol + NAD(+) + 4 H(+)(out). NDH-1 shuttles electrons from NADH, via FMN and iron-sulfur (Fe-S) centers, to quinones in the respiratory chain. The immediate electron acceptor for the enzyme in this species is believed to be ubiquinone. Couples the redox reaction to proton translocation (for every two electrons transferred, four hydrogen ions are translocated across the cytoplasmic membrane), and thus conserves the redox energy in a proton gradient. The sequence is that of NADH-quinone oxidoreductase subunit I from Cupriavidus metallidurans (strain ATCC 43123 / DSM 2839 / NBRC 102507 / CH34) (Ralstonia metallidurans).